Here is a 312-residue protein sequence, read N- to C-terminus: Elongation factor Ts (312 aa).

An involved in Mg(2+) ion dislocation from EF-Tu region spans residues T80 to V83.

Belongs to the EF-Ts family.

The protein localises to the cytoplasm. Functionally, associates with the EF-Tu.GDP complex and induces the exchange of GDP to GTP. It remains bound to the aminoacyl-tRNA.EF-Tu.GTP complex up to the GTP hydrolysis stage on the ribosome. The chain is Elongation factor Ts from Paramagnetospirillum magneticum (strain ATCC 700264 / AMB-1) (Magnetospirillum magneticum).